The sequence spans 121 residues: Fluoride-specific ion channel FluC (121 aa).

Helical transmembrane passes span 5-25 (LLIF…TISI), 33-53 (FPWG…VFYT), 66-83 (LMLT…STFS), and 98-118 (FFTY…LGIW). Positions 74 and 77 each coordinate Na(+).

The protein belongs to the fluoride channel Fluc/FEX (TC 1.A.43) family.

It is found in the cell inner membrane. The catalysed reaction is fluoride(in) = fluoride(out). With respect to regulation, na(+) is not transported, but it plays an essential structural role and its presence is essential for fluoride channel function. Fluoride-specific ion channel. Important for reducing fluoride concentration in the cell, thus reducing its toxicity. This Phocaeicola vulgatus (strain ATCC 8482 / DSM 1447 / JCM 5826 / CCUG 4940 / NBRC 14291 / NCTC 11154) (Bacteroides vulgatus) protein is Fluoride-specific ion channel FluC.